Reading from the N-terminus, the 359-residue chain is Photosystem II protein D1 1 (359 aa).

The next 3 helical transmembrane spans lie at 29 to 46, 118 to 133, and 142 to 156; these read YVGWFGVLMIPTLLAATT, HFLIGIYAYMGREWEL, and WICIAYSAPVAAASA. Residue histidine 118 coordinates chlorophyll a. Tyrosine 126 serves as a coordination point for pheophytin a. Residues aspartate 170 and glutamate 189 each coordinate [CaMn4O5] cluster. The helical transmembrane segment at 197–218 threads the bilayer; sequence FHMLGVAGVFGGSLFSAMHGSL. A chlorophyll a-binding site is contributed by histidine 198. Residues histidine 215 and 264 to 265 each bind a quinone; that span reads SF. Histidine 215 is a binding site for Fe cation. Fe cation is bound at residue histidine 272. Residues 274-288 form a helical membrane-spanning segment; sequence FLAAWPVVGIWFTAL. Histidine 332, glutamate 333, aspartate 342, and alanine 344 together coordinate [CaMn4O5] cluster. A propeptide spanning residues 345–359 is cleaved from the precursor; sequence AAESAPVALQAPAIG.

It belongs to the reaction center PufL/M/PsbA/D family. As to quaternary structure, PSII is composed of 1 copy each of membrane proteins PsbA, PsbB, PsbC, PsbD, PsbE, PsbF, PsbH, PsbI, PsbJ, PsbK, PsbL, PsbM, PsbT, PsbX, PsbY, PsbZ, Psb30/Ycf12, peripheral proteins PsbO, CyanoQ (PsbQ), PsbU, PsbV and a large number of cofactors. It forms dimeric complexes. Requires The D1/D2 heterodimer binds P680, chlorophylls that are the primary electron donor of PSII, and subsequent electron acceptors. It shares a non-heme iron and each subunit binds pheophytin, quinone, additional chlorophylls, carotenoids and lipids. D1 provides most of the ligands for the Mn4-Ca-O5 cluster of the oxygen-evolving complex (OEC). There is also a Cl(-1) ion associated with D1 and D2, which is required for oxygen evolution. The PSII complex binds additional chlorophylls, carotenoids and specific lipids. as cofactor. In terms of processing, tyr-161 forms a radical intermediate that is referred to as redox-active TyrZ, YZ or Y-Z. C-terminally processed by CtpA; processing is essential to allow assembly of the oxygen-evolving complex and thus photosynthetic growth.

The protein resides in the cellular thylakoid membrane. The enzyme catalyses 2 a plastoquinone + 4 hnu + 2 H2O = 2 a plastoquinol + O2. Its function is as follows. Photosystem II (PSII) is a light-driven water:plastoquinone oxidoreductase that uses light energy to abstract electrons from H(2)O, generating O(2) and a proton gradient subsequently used for ATP formation. It consists of a core antenna complex that captures photons, and an electron transfer chain that converts photonic excitation into a charge separation. The D1/D2 (PsbA/PsbD) reaction center heterodimer binds P680, the primary electron donor of PSII as well as several subsequent electron acceptors. The chain is Photosystem II protein D1 1 from Synechococcus sp. (strain RCC307).